The following is a 107-amino-acid chain: Homeobox protein HD-3 (107 aa).

Residues 6-65 (SKAPRTRMTAGQTRVLMSFFKDNPFPSTTAREKLSKVLGVGPRTVQIWFQNQRQKARGQA) constitute a DNA-binding region (homeobox).

It is found in the nucleus. This chain is Homeobox protein HD-3 (HD-3), found in Encephalitozoon cuniculi (strain GB-M1) (Microsporidian parasite).